A 379-amino-acid chain; its full sequence is Cytochrome b (379 aa).

4 consecutive transmembrane segments (helical) span residues 33–53 (FGSLLGICLMIQILTGLFLAM), 77–98 (WLIRYLHANGASMFFICLFIHV), 113–133 (WNIGIILFFTTMATAFVGYVL), and 178–198 (FFAFHFILPFIITAFVLVHLL). Positions 83 and 97 each coordinate heme b. Heme b contacts are provided by His182 and His196. His201 contributes to the a ubiquinone binding site. 4 helical membrane passes run 226 to 246 (IKDLLGILLLLMALMILALFF), 288 to 308 (LGGVLALILSILILAAFPLLN), 320 to 340 (ITQTIYWTFIANLLILTWIGG), and 347 to 367 (FTMXGXIASITYFIIIIILMP).

The protein belongs to the cytochrome b family. As to quaternary structure, the cytochrome bc1 complex contains 11 subunits: 3 respiratory subunits (MT-CYB, CYC1 and UQCRFS1), 2 core proteins (UQCRC1 and UQCRC2) and 6 low-molecular weight proteins (UQCRH/QCR6, UQCRB/QCR7, UQCRQ/QCR8, UQCR10/QCR9, UQCR11/QCR10 and a cleavage product of UQCRFS1). This cytochrome bc1 complex then forms a dimer. The cofactor is heme b.

Its subcellular location is the mitochondrion inner membrane. In terms of biological role, component of the ubiquinol-cytochrome c reductase complex (complex III or cytochrome b-c1 complex) that is part of the mitochondrial respiratory chain. The b-c1 complex mediates electron transfer from ubiquinol to cytochrome c. Contributes to the generation of a proton gradient across the mitochondrial membrane that is then used for ATP synthesis. In Necromys amoenus (Pleasant bolo mouse), this protein is Cytochrome b (MT-CYB).